Reading from the N-terminus, the 399-residue chain is Tryptophan synthase beta chain (399 aa).

Lys-91 is modified (N6-(pyridoxal phosphate)lysine).

This sequence belongs to the TrpB family. Tetramer of two alpha and two beta chains. The cofactor is pyridoxal 5'-phosphate.

It carries out the reaction (1S,2R)-1-C-(indol-3-yl)glycerol 3-phosphate + L-serine = D-glyceraldehyde 3-phosphate + L-tryptophan + H2O. Its pathway is amino-acid biosynthesis; L-tryptophan biosynthesis; L-tryptophan from chorismate: step 5/5. Its function is as follows. The beta subunit is responsible for the synthesis of L-tryptophan from indole and L-serine. This Shouchella clausii (strain KSM-K16) (Alkalihalobacillus clausii) protein is Tryptophan synthase beta chain.